The sequence spans 404 residues: Epoxide hydrolase 1 (404 aa).

The chain crosses the membrane as a helical span at residues 74 to 96; the sequence is ILVRLLQFYYFVKFSAILFLGFA. The AB hydrolase-1 domain occupies 140–389; that stretch reads PLMLFIHGYP…ASHWVQQDEP (250 aa). Residue D215 is the Nucleophile of the active site. Y327 serves as the catalytic Proton donor. Residue H382 is the Proton acceptor of the active site.

The protein belongs to the AB hydrolase superfamily. Epoxide hydrolase family.

Its subcellular location is the membrane. It carries out the reaction an epoxide + H2O = an ethanediol. It catalyses the reaction 8,9-epoxy-(5Z,11Z,14Z)-eicosatrienoate + H2O = 8,9-dihydroxy-(5Z,11Z,14Z)-eicosatrienoate. The catalysed reaction is 11,12-epoxy-(5Z,8Z,14Z)-eicosatrienoate + H2O = 11,12-dihydroxy-(5Z,8Z,14Z)-eicosatrienoate. The enzyme catalyses 14,15-epoxy-(5Z,8Z,11Z)-eicosatrienoate + H2O = 14,15-dihydroxy-(5Z,8Z,11Z)-eicosatrienoate. It carries out the reaction 12,13-epoxy-(9Z)-octadecenoate + H2O = 12,13-dihydroxy-(9Z)-octadecenoate. It catalyses the reaction 9,10-epoxy-(12Z)-octadecenoate + H2O = 9,10-dihydroxy-(12Z)-octadecenoate. The protein operates within lipid metabolism. Its function is as follows. Catalyzes the hydrolysis of epoxide-containing fatty acids. Active against epoxyeicosatrienoic acids (EETs) including 8,9-epoxy-(5Z,11Z,14Z)-eicosatrienoate (8,9-EET), 11,12-epoxy-(5Z,8Z,14Z)-eicosatrienoate (11,12-EET) and 14,15-epoxy-(5Z,8Z,11Z)-eicosatrienoate (14,15-EET) and the linoleic acid metabolites 12,13-epoxy-(9Z)-octadecenoate (12,13-EpOME) and 9,10-epoxy-(12Z)-octadecenoate (9,10-EpOME). These epoxides function as lipid signaling molecules, the enzyme can deplete the supply of the epoxide signal by transforming them into diol species that are more readily eliminated through excretion. The polypeptide is Epoxide hydrolase 1 (Caenorhabditis elegans).